A 188-amino-acid chain; its full sequence is Elongation factor P (188 aa).

The protein belongs to the elongation factor P family.

It is found in the cytoplasm. The protein operates within protein biosynthesis; polypeptide chain elongation. Functionally, involved in peptide bond synthesis. Stimulates efficient translation and peptide-bond synthesis on native or reconstituted 70S ribosomes in vitro. Probably functions indirectly by altering the affinity of the ribosome for aminoacyl-tRNA, thus increasing their reactivity as acceptors for peptidyl transferase. This Azotobacter vinelandii (strain DJ / ATCC BAA-1303) protein is Elongation factor P.